The sequence spans 109 residues: Thiosulfate sulfurtransferase GlpE (109 aa).

The region spanning Arg16 to Ser104 is the Rhodanese domain. Catalysis depends on Cys64, which acts as the Cysteine persulfide intermediate.

The protein belongs to the GlpE family.

It localises to the cytoplasm. The catalysed reaction is thiosulfate + hydrogen cyanide = thiocyanate + sulfite + 2 H(+). It carries out the reaction thiosulfate + [thioredoxin]-dithiol = [thioredoxin]-disulfide + hydrogen sulfide + sulfite + 2 H(+). In terms of biological role, transferase that catalyzes the transfer of sulfur from thiosulfate to thiophilic acceptors such as cyanide or dithiols. May function in a CysM-independent thiosulfate assimilation pathway by catalyzing the conversion of thiosulfate to sulfite, which can then be used for L-cysteine biosynthesis. In Pseudomonas fluorescens (strain SBW25), this protein is Thiosulfate sulfurtransferase GlpE.